The sequence spans 214 residues: CASP-like protein 3A1 (214 aa).

Over methionine 1–histidine 49 the chain is Cytoplasmic. The chain crosses the membrane as a helical span at residues valine 50–alanine 70. At histidine 71–glutamate 96 the chain is on the extracellular side. The helical transmembrane segment at tyrosine 97 to methionine 117 threads the bilayer. At serine 118–histidine 132 the chain is on the cytoplasmic side. The chain crosses the membrane as a helical span at residues alanine 133 to alanine 153. The Extracellular segment spans residues alanine 154–asparagine 182. Asparagine 161 carries N-linked (GlcNAc...) asparagine glycosylation. A helical transmembrane segment spans residues histidine 183–valine 203. The Cytoplasmic segment spans residues glutamine 204–tyrosine 214.

Belongs to the Casparian strip membrane proteins (CASP) family. Homodimer and heterodimers.

The protein resides in the cell membrane. The polypeptide is CASP-like protein 3A1 (Ricinus communis (Castor bean)).